A 444-amino-acid chain; its full sequence is Tol-Pal system protein TolB (444 aa).

The signal sequence occupies residues 1 to 26 (MTLFRTLAPMGLALALLLPAAVPAAA). Over residues 281–310 (IYTLDTGSGTRRQLTNSPSIETAPSYSPDG) the composition is skewed to polar residues. Residues 281–311 (IYTLDTGSGTRRQLTNSPSIETAPSYSPDGS) form a disordered region.

This sequence belongs to the TolB family. The Tol-Pal system is composed of five core proteins: the inner membrane proteins TolA, TolQ and TolR, the periplasmic protein TolB and the outer membrane protein Pal. They form a network linking the inner and outer membranes and the peptidoglycan layer.

The protein localises to the periplasm. Its function is as follows. Part of the Tol-Pal system, which plays a role in outer membrane invagination during cell division and is important for maintaining outer membrane integrity. The polypeptide is Tol-Pal system protein TolB (Cereibacter sphaeroides (strain ATCC 17029 / ATH 2.4.9) (Rhodobacter sphaeroides)).